The following is a 147-amino-acid chain: TRAP-T-associated universal stress protein TeaD (147 aa).

ATP is bound by residues 8–10 (PVD), V38, 117–122 (GAQGTN), and 131–133 (SVA).

It belongs to the universal stress protein A family. As to quaternary structure, homodimer or homotetramer; in equilibrium. The dimer/tetramer ratio is ATP-dependent. ATP stabilizes dimer-dimer complexes, with one ATP molecule bound to each monomer.

It localises to the cytoplasm. Functionally, ATP-binding protein that negatively regulates activity of the tripartite ATP-independent periplasmic (TRAP) ectoine transport system TeaABC. May regulate uptake according to the ATP status of the cell. This chain is TRAP-T-associated universal stress protein TeaD (teaD), found in Halomonas elongata (strain ATCC 33173 / DSM 2581 / NBRC 15536 / NCIMB 2198 / 1H9).